The primary structure comprises 525 residues: ADP-ribosylation factor GTPase-activating protein 3 (525 aa).

Residues 10–126 (LAIFKRLRSV…IKTLATQATR (117 aa)) enclose the Arf-GAP domain. A C4-type zinc finger spans residues 25–48 (CFDCGAKNPSWASISYGVFLCIDC). A disordered region spans residues 160 to 233 (VSGATQASAQ…KGLGAKKGSL (74 aa)). Over residues 162 to 177 (GATQASAQPEPASSTP) the composition is skewed to polar residues. Low complexity predominate over residues 222–233 (AKKGLGAKKGSL). 4 positions are modified to phosphoserine: S232, S242, S271, and S275. The disordered stretch occupies residues 249–271 (QAQAVDKRKEQEDLARGTPKEES). Over residues 293 to 305 (LNLSGQKKAEAER) the composition is skewed to basic and acidic residues. Disordered stretches follow at residues 293–364 (LNLS…SSSR) and 377–428 (FSSW…EAQK). Over residues 319-333 (HSVTSDMQTIEQESP) the composition is skewed to polar residues. The residue at position 332 (S332) is a Phosphoserine. Over residues 349–363 (SYFSSSSKWSEQSSS) the composition is skewed to low complexity. S379 carries the post-translational modification Phosphoserine. A compositionally biased stretch (basic and acidic residues) spans 387–398 (YWKKDSSRDPEP). Phosphoserine occurs at positions 437, 460, 462, 464, 466, and 467.

The protein resides in the cytoplasm. It localises to the golgi apparatus membrane. Its activity is regulated as follows. GAP activity stimulated by phosphatidylinositol 4,5-bisphosphate (PIP2). Functionally, GTPase-activating protein (GAP) for ADP ribosylation factor 1 (ARF1). Hydrolysis of ARF1-bound GTP may lead to dissociation of coatomer from Golgi-derived membranes to allow fusion with target membranes. This chain is ADP-ribosylation factor GTPase-activating protein 3, found in Rattus norvegicus (Rat).